Here is a 478-residue protein sequence, read N- to C-terminus: Cytochrome c-552 (478 aa).

An N-terminal signal peptide occupies residues 1-26 (MTRIKINARRIFSLLIPFFFFTSVHA). His94 contributes to the heme c binding site. Residues Cys122, Cys125, and Lys126 each contribute to the heme site. Residues Cys160, Cys163, His164, Cys209, Cys212, and His213 each coordinate heme c. Glu215, Tyr216, Lys261, and Gln263 together coordinate Ca(2+). Tyr216 contributes to the substrate binding site. His264 serves as a coordination point for substrate. His275, Cys282, Cys285, His286, His301, Cys314, Cys317, His318, and His393 together coordinate heme c.

It belongs to the cytochrome c-552 family. The cofactor is Ca(2+). It depends on heme c as a cofactor.

It localises to the periplasm. It catalyses the reaction 6 Fe(III)-[cytochrome c] + NH4(+) + 2 H2O = 6 Fe(II)-[cytochrome c] + nitrite + 8 H(+). It functions in the pathway nitrogen metabolism; nitrate reduction (assimilation). Functionally, catalyzes the reduction of nitrite to ammonia, consuming six electrons in the process. The protein is Cytochrome c-552 of Escherichia coli O17:K52:H18 (strain UMN026 / ExPEC).